A 592-amino-acid polypeptide reads, in one-letter code: PiggyBac transposable element-derived protein 2 (592 aa).

A disordered region spans residues 31–69; that stretch reads EEEESNNNREEIFIAPPDNAAGEFTDEDSGDEDSQRGAH.

The polypeptide is PiggyBac transposable element-derived protein 2 (PGBD2) (Homo sapiens (Human)).